The chain runs to 335 residues: Glyceraldehyde-3-phosphate dehydrogenase 1 (335 aa).

NAD(+) is bound by residues 13 to 14 and glycine 111; that span reads TI. Residue 140 to 142 coordinates D-glyceraldehyde 3-phosphate; sequence SCN. Cysteine 141 serves as the catalytic Nucleophile. Residue arginine 169 coordinates NAD(+). Residues threonine 171 and 195 to 196 contribute to the D-glyceraldehyde 3-phosphate site; that span reads HG. Glutamine 300 is a binding site for NAD(+).

It belongs to the glyceraldehyde-3-phosphate dehydrogenase family. As to quaternary structure, homotetramer.

The protein localises to the cytoplasm. The enzyme catalyses D-glyceraldehyde 3-phosphate + phosphate + NADP(+) = (2R)-3-phospho-glyceroyl phosphate + NADPH + H(+). The catalysed reaction is D-glyceraldehyde 3-phosphate + phosphate + NAD(+) = (2R)-3-phospho-glyceroyl phosphate + NADH + H(+). It functions in the pathway carbohydrate degradation; glycolysis; pyruvate from D-glyceraldehyde 3-phosphate: step 1/5. The sequence is that of Glyceraldehyde-3-phosphate dehydrogenase 1 (gapA) from Methanosarcina acetivorans (strain ATCC 35395 / DSM 2834 / JCM 12185 / C2A).